A 483-amino-acid chain; its full sequence is Glutamyl-tRNA(Gln) amidotransferase subunit A (483 aa).

Catalysis depends on charge relay system residues Lys-76 and Ser-151. Ser-175 functions as the Acyl-ester intermediate in the catalytic mechanism.

It belongs to the amidase family. GatA subfamily. As to quaternary structure, heterotrimer of A, B and C subunits.

The catalysed reaction is L-glutamyl-tRNA(Gln) + L-glutamine + ATP + H2O = L-glutaminyl-tRNA(Gln) + L-glutamate + ADP + phosphate + H(+). Its function is as follows. Allows the formation of correctly charged Gln-tRNA(Gln) through the transamidation of misacylated Glu-tRNA(Gln) in organisms which lack glutaminyl-tRNA synthetase. The reaction takes place in the presence of glutamine and ATP through an activated gamma-phospho-Glu-tRNA(Gln). This is Glutamyl-tRNA(Gln) amidotransferase subunit A from Azotobacter vinelandii (strain DJ / ATCC BAA-1303).